Reading from the N-terminus, the 112-residue chain is Photosystem II reaction center Psb28 protein (112 aa).

Belongs to the Psb28 family. Part of the photosystem II complex.

The protein localises to the cellular thylakoid membrane. The chain is Photosystem II reaction center Psb28 protein from Synechococcus elongatus (strain ATCC 33912 / PCC 7942 / FACHB-805) (Anacystis nidulans R2).